Here is a 445-residue protein sequence, read N- to C-terminus: UNC93-like protein MFSD11 (445 aa).

The helical transmembrane segment at 8–28 threads the bilayer; sequence LLNIVILGVGFMFMFTAFQTS. A glycan (N-linked (GlcNAc...) asparagine) is linked at N40. 4 consecutive transmembrane segments (helical) span residues 52 to 72, 74 to 94, 98 to 118, and 138 to 158; these read LAII…VIAV, GCQM…AMFI, TWSF…LWTA, and IFWA…YLAW. An N-linked (GlcNAc...) asparagine glycan is attached at N163. 7 helical membrane passes run 170–190, 239–259, 277–297, 309–329, 343–363, 385–405, and 415–435; these read RTVF…FFLI, MLLL…YSGV, LIGL…GLFG, PVVI…YLYM, LSAF…LLGL, APAF…AFFY, and LLIL…VEWG.

Belongs to the unc-93 family.

It localises to the membrane. This is UNC93-like protein MFSD11 (mfsd11) from Xenopus laevis (African clawed frog).